The chain runs to 186 residues: MEPQTKDPDPLPRLVHIGEIQFNLGEVTTGGVTPRGTFIFCPITGGHFTTVFPLPDGFGIHSEAIEGLRAEVLPGGGDYPLIHNNELAELNVSVVAKGLNNDHIFRITSFGICEWNKLIFDMMGQTAAARSTEMGEINAWQVFRINTDSPEYAWLNWACIIGQERLIYEDSRMAKTHMKLFQFLVK.

A helical transmembrane segment spans residues 24–43 (LGEVTTGGVTPRGTFIFCPI).

Its subcellular location is the membrane. It participates in sesquiterpene biosynthesis. Part of the gene cluster that mediates the biosynthesis of PR-toxin, a bicyclic sesquiterpene belonging to the eremophilane class and acting as a mycotoxin. The first step of the pathway is catalyzed by the aristolochene synthase which performs the cyclization of trans,trans-farnesyl diphosphate (FPP) to the bicyclic sesquiterpene aristolochene. Following the formation of aristolochene, the non-oxygenated aristolochene is converted to the trioxygenated intermediate eremofortin B, via 7-epi-neopetasone. This conversion appears to involve three enzymes, a hydroxysterol oxidase-like enzyme, the quinone-oxidase prx3 that forms the quinone-type-structure in the bicyclic nucleus of aristolochene with the C8-oxo group and the C-3 hydroxyl group, and the P450 monooxygenase ORF6 that introduces the epoxide at the double bond between carbons 1 and 2. No monoxy or dioxy-intermediates have been reported to be released to the broth, so these three early oxidative reactions may be coupled together. Eremofortin B is further oxidized by another P450 monooxygenase, that introduces a second epoxide between carbons 7 and 11 prior to acetylation to eremofortin A by the acetyltransferase ORF8. The second epoxidation may be performed by a second P450 monooxygenase. After the acetylation step, eremofortin A is converted to eremofortin C and then to PR-toxin. First the conversion of eremofortin A to eremofortin C proceeds by oxidation of the side chain of the molecule at C-12 and is catalyzed by the short-chain oxidoreductase prx1. The cytochrome P450 monooxygenase ORF6 is probably also involved in this step. The primary alcohol formed at C-12 is finally oxidized by the short-chain alcohol dehydrogenase prx4 that forms PR-toxin. This Penicillium roqueforti (strain FM164) protein is PR-toxin biosynthesis cluster protein 7.